Consider the following 410-residue polypeptide: Sulfate adenylyltransferase (410 aa).

Belongs to the sulfate adenylyltransferase family.

The catalysed reaction is sulfate + ATP + H(+) = adenosine 5'-phosphosulfate + diphosphate. Its pathway is sulfur metabolism; hydrogen sulfide biosynthesis; sulfite from sulfate: step 1/3. The protein is Sulfate adenylyltransferase of Syntrophobacter fumaroxidans (strain DSM 10017 / MPOB).